A 467-amino-acid chain; its full sequence is ATP-dependent protease ATPase subunit HslU (467 aa).

ATP is bound by residues Val-22 and 64–69 (GVGKTE). Residues 149–192 (QTNNPLESLFGGAIPNFGQNNEDEEEPPTEEIKTKRSEIKRQLE) are disordered. A compositionally biased stretch (basic and acidic residues) spans 178–192 (EEIKTKRSEIKRQLE). ATP-binding residues include Asp-280, Glu-345, and Arg-417.

Belongs to the ClpX chaperone family. HslU subfamily. In terms of assembly, a double ring-shaped homohexamer of HslV is capped on each side by a ring-shaped HslU homohexamer. The assembly of the HslU/HslV complex is dependent on binding of ATP.

It localises to the cytoplasm. Functionally, ATPase subunit of a proteasome-like degradation complex; this subunit has chaperone activity. The binding of ATP and its subsequent hydrolysis by HslU are essential for unfolding of protein substrates subsequently hydrolyzed by HslV. HslU recognizes the N-terminal part of its protein substrates and unfolds these before they are guided to HslV for hydrolysis. In Staphylococcus aureus (strain MRSA252), this protein is ATP-dependent protease ATPase subunit HslU.